The primary structure comprises 298 residues: uncharacterized protein (298 aa).

Residues lysine 194–serine 295 form the HTH araC/xylS-type domain. 2 consecutive DNA-binding regions (H-T-H motif) follow at residues glutamate 214–isoleucine 235 and valine 262–tyrosine 285.

This is an uncharacterized protein from Haemophilus influenzae (strain ATCC 51907 / DSM 11121 / KW20 / Rd).